The chain runs to 505 residues: DEAD-box ATP-dependent RNA helicase 41 (505 aa).

The segment at 27 to 56 (GEPKCVICSRYGEYICDETNDDVCSLECKQ) adopts an HIT-type zinc-finger fold. The Q motif motif lies at 110–138 (LTFTSCGLPPKLLLNLETAGYDFPTPIQM). Residues 141 to 318 (IPAALTGKSL…GSLAKEIILV (178 aa)) form the Helicase ATP-binding domain. 154 to 161 (ADTGSGKT) provides a ligand contact to ATP. The DEAD box signature appears at 267-270 (DEVD). In terms of domain architecture, Helicase C-terminal spans 342–492 (KKQKLFDILR…AIPKELINLT (151 aa)).

This sequence belongs to the DEAD box helicase family. DDX59 subfamily.

It carries out the reaction ATP + H2O = ADP + phosphate + H(+). The sequence is that of DEAD-box ATP-dependent RNA helicase 41 (RH41) from Arabidopsis thaliana (Mouse-ear cress).